Reading from the N-terminus, the 337-residue chain is MQPDSYPKILFGLTLLLVITAVISLGIGRYSLSVPQIGQILWAKATALEIDPVQQQVIFQVRLPRILTALCVGAGLALSGVVLQGIFRNPLVNPHIIGVTSGSAFGGTLAIFFGFSLYGLFTSTILFGFGTLALVFLFSFKFNQRSLLMLILIGMILSGLFSALVSLLQYISDTEEKLPSIVFWLMGSFATSNWEKLLFFFVPFLLCSSILLSLSWRLNLLSLDEKEAKALGVKMAPLRWLVIFLSGSLVACQVAISGSIGWVGLIIPHLSRMLVGANHQSLLPCTMLVGATYMLLVDNVARSLSDAEIPISILTALIGAPLFGVLVYKLKRGGMNE.

Residues 1–5 (MQPDS) are Cytoplasmic-facing. The chain crosses the membrane as a helical span at residues 6–25 (YPKILFGLTLLLVITAVISL). The Periplasmic segment spans residues 26-51 (GIGRYSLSVPQIGQILWAKATALEID). A helical membrane pass occupies residues 52–87 (PVQQQVIFQVRLPRILTALCVGAGLALSGVVLQGIF). Topologically, residues 88–98 (RNPLVNPHIIG) are cytoplasmic. A helical transmembrane segment spans residues 99-113 (VTSGSAFGGTLAIFF). The Periplasmic portion of the chain corresponds to 114-116 (GFS). A helical membrane pass occupies residues 117–140 (LYGLFTSTILFGFGTLALVFLFSF). The Cytoplasmic segment spans residues 141-146 (KFNQRS). A helical membrane pass occupies residues 147-171 (LLMLILIGMILSGLFSALVSLLQYI). At 172-193 (SDTEEKLPSIVFWLMGSFATSN) the chain is on the periplasmic side. A helical transmembrane segment spans residues 194–214 (WEKLLFFFVPFLLCSSILLSL). Over 215–234 (SWRLNLLSLDEKEAKALGVK) the chain is Cytoplasmic. The helical transmembrane segment at 235-257 (MAPLRWLVIFLSGSLVACQVAIS) threads the bilayer. Residues 258-264 (GSIGWVG) lie on the Periplasmic side of the membrane. Residues 265-275 (LIIPHLSRMLV) traverse the membrane as a helical segment. Over 276–278 (GAN) the chain is Cytoplasmic. Residues 279–304 (HQSLLPCTMLVGATYMLLVDNVARSL) form a helical membrane-spanning segment. Over 305–310 (SDAEIP) the chain is Periplasmic. The chain crosses the membrane as a helical span at residues 311 to 329 (ISILTALIGAPLFGVLVYK). At 330-337 (LKRGGMNE) the chain is on the cytoplasmic side.

It belongs to the binding-protein-dependent transport system permease family. FecCD subfamily. As to quaternary structure, the complex is composed of two ATP-binding proteins (MolC), two transmembrane proteins (MolB) and a solute-binding protein (MolA).

It is found in the cell inner membrane. Its activity is regulated as follows. The MolBCA complex shows a decrease in affinity in the presence of increasing concentrations of substrate and nucleotide. Part of the ABC transporter complex MolBCA involved in molybdate import. Responsible for the translocation of the substrate across the membrane. Functions as a low-affinity molybdate transporter. The sequence is that of Molybdate import system permease protein MolB from Haemophilus influenzae (strain ATCC 51907 / DSM 11121 / KW20 / Rd).